The chain runs to 104 residues: Large ribosomal subunit protein uL23 (104 aa).

Belongs to the universal ribosomal protein uL23 family. Part of the 50S ribosomal subunit. Contacts protein L29, and trigger factor when it is bound to the ribosome.

Its function is as follows. One of the early assembly proteins it binds 23S rRNA. One of the proteins that surrounds the polypeptide exit tunnel on the outside of the ribosome. Forms the main docking site for trigger factor binding to the ribosome. This chain is Large ribosomal subunit protein uL23, found in Nostoc punctiforme (strain ATCC 29133 / PCC 73102).